A 103-amino-acid polypeptide reads, in one-letter code: Large ribosomal subunit protein bL21 (103 aa).

This sequence belongs to the bacterial ribosomal protein bL21 family. In terms of assembly, part of the 50S ribosomal subunit. Contacts protein L20.

In terms of biological role, this protein binds to 23S rRNA in the presence of protein L20. This chain is Large ribosomal subunit protein bL21, found in Chromohalobacter salexigens (strain ATCC BAA-138 / DSM 3043 / CIP 106854 / NCIMB 13768 / 1H11).